The chain runs to 316 residues: Adenine deaminase (316 aa).

Positions 14, 16, and 194 each coordinate Zn(2+). Glutamate 197 functions as the Proton donor in the catalytic mechanism. Zn(2+) is bound at residue aspartate 275. Aspartate 276 serves as a coordination point for substrate.

This sequence belongs to the metallo-dependent hydrolases superfamily. Adenosine and AMP deaminases family. Adenine deaminase type 2 subfamily. The cofactor is Zn(2+).

The enzyme catalyses adenine + H2O + H(+) = hypoxanthine + NH4(+). Its function is as follows. Catalyzes the hydrolytic deamination of adenine to hypoxanthine. Plays an important role in the purine salvage pathway and in nitrogen catabolism. This chain is Adenine deaminase, found in Pseudomonas paraeruginosa (strain DSM 24068 / PA7) (Pseudomonas aeruginosa (strain PA7)).